A 241-amino-acid polypeptide reads, in one-letter code: Probable transcriptional regulatory protein PSHAb0060 (241 aa).

Belongs to the TACO1 family.

It localises to the cytoplasm. The chain is Probable transcriptional regulatory protein PSHAb0060 from Pseudoalteromonas translucida (strain TAC 125).